Here is a 169-residue protein sequence, read N- to C-terminus: Ureidoglycolate lyase (169 aa).

It belongs to the ureidoglycolate lyase family. In terms of assembly, homodimer. Ni(2+) is required as a cofactor.

The catalysed reaction is (S)-ureidoglycolate = urea + glyoxylate. Its pathway is nitrogen metabolism; (S)-allantoin degradation. Functionally, catalyzes the catabolism of the allantoin degradation intermediate (S)-ureidoglycolate, generating urea and glyoxylate. Involved in the utilization of allantoin as nitrogen source. The chain is Ureidoglycolate lyase from Brucella abortus biovar 1 (strain 9-941).